The chain runs to 272 residues: F-box protein PP2-B10 (272 aa).

Positions 11–57 (SSPFDSFPEDCISYIISFTNPRDACVAATVSKTFESTVKSDIIWEKF) constitute an F-box domain.

As to quaternary structure, part of a SCF (ASK-cullin-F-box) protein ligase complex. Interacts with SKP1B/ASK2, ASK11 and ASK12.

Its pathway is protein modification; protein ubiquitination. Functionally, component of SCF(ASK-cullin-F-box) E3 ubiquitin ligase complexes, which may mediate the ubiquitination and subsequent proteasomal degradation of target proteins. The chain is F-box protein PP2-B10 (PP2B10) from Arabidopsis thaliana (Mouse-ear cress).